The primary structure comprises 535 residues: Peptide chain release factor 3 (535 aa).

Positions Ala8–Arg278 constitute a tr-type G domain. GTP is bound by residues Ser17–Thr24, Asp85–His89, and Asn139–Asp142.

It belongs to the TRAFAC class translation factor GTPase superfamily. Classic translation factor GTPase family. PrfC subfamily.

It localises to the cytoplasm. Increases the formation of ribosomal termination complexes and stimulates activities of RF-1 and RF-2. It binds guanine nucleotides and has strong preference for UGA stop codons. It may interact directly with the ribosome. The stimulation of RF-1 and RF-2 is significantly reduced by GTP and GDP, but not by GMP. The chain is Peptide chain release factor 3 from Bordetella parapertussis (strain 12822 / ATCC BAA-587 / NCTC 13253).